Reading from the N-terminus, the 233-residue chain is 5'-methylthioadenosine/S-adenosylhomocysteine nucleosidase (233 aa).

E12 acts as the Proton acceptor in catalysis. Substrate is bound by residues G78, I156, and 177–178 (ME). Catalysis depends on D201, which acts as the Proton donor.

Belongs to the PNP/UDP phosphorylase family. MtnN subfamily.

It catalyses the reaction S-adenosyl-L-homocysteine + H2O = S-(5-deoxy-D-ribos-5-yl)-L-homocysteine + adenine. The enzyme catalyses S-methyl-5'-thioadenosine + H2O = 5-(methylsulfanyl)-D-ribose + adenine. It carries out the reaction 5'-deoxyadenosine + H2O = 5-deoxy-D-ribose + adenine. The protein operates within amino-acid biosynthesis; L-methionine biosynthesis via salvage pathway; S-methyl-5-thio-alpha-D-ribose 1-phosphate from S-methyl-5'-thioadenosine (hydrolase route): step 1/2. Its function is as follows. Catalyzes the irreversible cleavage of the glycosidic bond in both 5'-methylthioadenosine (MTA) and S-adenosylhomocysteine (SAH/AdoHcy) to adenine and the corresponding thioribose, 5'-methylthioribose and S-ribosylhomocysteine, respectively. Also cleaves 5'-deoxyadenosine, a toxic by-product of radical S-adenosylmethionine (SAM) enzymes, into 5-deoxyribose and adenine. The protein is 5'-methylthioadenosine/S-adenosylhomocysteine nucleosidase of Listeria innocua serovar 6a (strain ATCC BAA-680 / CLIP 11262).